The primary structure comprises 211 residues: Probable transcriptional regulatory protein SgaR (211 aa).

A Response regulatory domain is found at 10-126 (EVSIVDQNPV…VLLEAVVSVA (117 aa)). At aspartate 15 the chain carries 4-aspartylphosphate. The 66-residue stretch at 141 to 206 (NHDPLESLTA…MAVALHVSIN (66 aa)) folds into the HTH luxR-type domain. Residues 165 to 184 (NLQIAARTGISRNTVKYHLK) constitute a DNA-binding region (H-T-H motif).

Functionally, not known. Could act on the sgaA gene expression. The chain is Probable transcriptional regulatory protein SgaR (sgaR) from Hyphomicrobium methylovorum.